The following is a 111-amino-acid chain: Toxin 3FTx-Tri3 (111 aa).

The N-terminal stretch at 1–19 (MKTLLLALVVVAFMCLGSA) is a signal peptide. The propeptide occupies 20–34 (DEVGLGNEQIDRGRR). Pyrrolidone carboxylic acid is present on Gln35. 4 disulfide bridges follow: Cys44/Cys68, Cys47/Cys87, Cys91/Cys102, and Cys103/Cys108.

Belongs to the three-finger toxin family. Ancestral subfamily. Boigatoxin sub-subfamily. As to expression, expressed by the venom gland.

Its subcellular location is the secreted. In terms of biological role, potent postsynaptic neurotoxin. Displays readily reversible competitive antagonism at the nicotinic acetylcholine receptor (nAChR). In Trimorphodon biscutatus (Western lyre snake), this protein is Toxin 3FTx-Tri3.